Here is a 733-residue protein sequence, read N- to C-terminus: Leucine-rich repeat neuronal protein 4 (733 aa).

The N-terminal stretch at 1–19 is a signal peptide; the sequence is MRWTLMLQLLQLLLQLLMA. At 20–676 the chain is on the extracellular side; sequence QSQSLERISQ…CATFTTKPSS (657 aa). LRR repeat units lie at residues 62 to 82, 83 to 106, 107 to 128, 130 to 151, 154 to 175, 178 to 199, 207 to 230, 231 to 253, 256 to 278, and 281 to 302; these read GVTT…CLPR, TLRS…GRLP, ELRV…RDTL, ELRE…AGPS, SLRS…TFAC, ALRL…AFAG, ALEL…RNLP, KLKS…IFKM, NLRQ…IFQD, and NLQV…NSSQ. The N-linked (GlcNAc...) asparagine glycan is linked to asparagine 70. A glycan (N-linked (GlcNAc...) asparagine) is linked at asparagine 183. N-linked (GlcNAc...) asparagine glycosylation is found at asparagine 291, asparagine 299, asparagine 327, asparagine 408, and asparagine 469. Residues 311–364 form the LRRCT domain; sequence NPLICSCELAWLLVDVNKTVLHRAADTMCEPALGSTGPFSGPLSLSHLSNVCRS. Residues 395–423 are disordered; the sequence is STALSAQPGGSQQNITKVPSLTMTSPTQG. The tract at residues 480 to 518 is disordered; the sequence is KYLEPLPTSPNPRSLPQTKQRTQATPRALHTDPPQDEIP. Residues 490–504 show a composition bias toward polar residues; sequence NPRSLPQTKQRTQAT. The Fibronectin type-III domain maps to 576 to 675; that stretch reads TPDPPTLQGV…SCATFTTKPS (100 aa). N-linked (GlcNAc...) asparagine glycosylation occurs at asparagine 619. The helical transmembrane segment at 677–697 threads the bilayer; that stretch reads VVIFWGLCTASGLLLVSTLVL. Topologically, residues 698–733 are cytoplasmic; the sequence is SVCLWRQRWKPHRQFYDTHLVAFKNPARAEEVTQWE.

It localises to the membrane. Its function is as follows. May play an important role in hippocampus-dependent long-lasting memory. The polypeptide is Leucine-rich repeat neuronal protein 4 (Lrrn4) (Mus musculus (Mouse)).